Consider the following 863-residue polypeptide: Desmocollin-2 (863 aa).

Positions 1 to 89 are excised as a propeptide; sequence KFIGRVNLKE…QEKVLRRAKR (89 aa). 5 consecutive Cadherin domains span residues 90–197, 198–309, 310–423, 424–528, and 529–644; these read RWAP…APIF, TETS…LPTF, TRSS…GPEC, DPRV…VIPQ, and RTVV…ILGK. At 90–644 the chain is on the extracellular side; that stretch reads RWAPIPCSVP…TGNREVILGK (555 aa). The N-linked (GlcNAc...) asparagine glycan is linked to N120. Residues N346, N495, and N579 are each glycosylated (N-linked (GlcNAc...) asparagine). Residues 645–665 traverse the membrane as a helical segment; sequence WAILAILLGIALLFCILFTLV. Topologically, residues 666–863 are cytoplasmic; the sequence is CGATTGADKK…RTLAETCMKR (198 aa). Phosphoserine occurs at positions 826, 830, and 835.

Interacts with DSP, PKP2 and JUP. Interacts with DSG3; the interaction may limit the interaction of DSC3 with p38MAPK family members and therefore repress p38MAPK signaling activation. As to expression, expressed in esophagus and rumen. Weakly expressed in epithelia and cardiac muscle.

The protein localises to the cell membrane. It localises to the cell junction. Its subcellular location is the desmosome. In terms of biological role, a component of desmosome cell-cell junctions which are required for positive regulation of cellular adhesion. Promotes timely incorporation of DSG2 into desmosome intercellular junctions and promotes interaction of desmosome cell junctions with intermediate filament cytokeratin, via modulation of DSP phosphorylation. Plays an important role in desmosome-mediated maintenance of intestinal epithelial cell intercellular adhesion strength and barrier function. Positively regulates wound healing of intestinal mucosa via promotion of epithelial cell migration, and also plays a role in mechanotransduction of force between intestinal epithelial cells and extracellular matrix. May contribute to epidermal cell positioning (stratification) by mediating differential adhesiveness between cells that express different isoforms. This chain is Desmocollin-2 (DSC2), found in Bos taurus (Bovine).